The sequence spans 331 residues: Tetraacyldisaccharide 4'-kinase (331 aa).

Residue 59–66 (FVGGTGKT) coordinates ATP.

It belongs to the LpxK family.

The enzyme catalyses a lipid A disaccharide + ATP = a lipid IVA + ADP + H(+). The protein operates within glycolipid biosynthesis; lipid IV(A) biosynthesis; lipid IV(A) from (3R)-3-hydroxytetradecanoyl-[acyl-carrier-protein] and UDP-N-acetyl-alpha-D-glucosamine: step 6/6. Functionally, transfers the gamma-phosphate of ATP to the 4'-position of a tetraacyldisaccharide 1-phosphate intermediate (termed DS-1-P) to form tetraacyldisaccharide 1,4'-bis-phosphate (lipid IVA). In Alkalilimnicola ehrlichii (strain ATCC BAA-1101 / DSM 17681 / MLHE-1), this protein is Tetraacyldisaccharide 4'-kinase.